The following is a 414-amino-acid chain: Imidazolonepropionase (414 aa).

The segment covering 1–20 has biased composition (polar residues); sequence MSHQLFRNTRIYSPMDSGQP. A disordered region spans residues 1-26; that stretch reads MSHQLFRNTRIYSPMDSGQPSAGKAQ. Fe(3+)-binding residues include H81 and H83. Residues H81 and H83 each coordinate Zn(2+). R90, Y153, and H186 together coordinate 4-imidazolone-5-propanoate. Position 153 (Y153) interacts with N-formimidoyl-L-glutamate. H251 contributes to the Fe(3+) binding site. Zn(2+) is bound at residue H251. Residue E254 participates in 4-imidazolone-5-propanoate binding. Residue D325 coordinates Fe(3+). Position 325 (D325) interacts with Zn(2+). Residues N327 and G329 each contribute to the N-formimidoyl-L-glutamate site. Residue S330 participates in 4-imidazolone-5-propanoate binding.

It belongs to the metallo-dependent hydrolases superfamily. HutI family. Requires Zn(2+) as cofactor. Fe(3+) is required as a cofactor.

It is found in the cytoplasm. The catalysed reaction is 4-imidazolone-5-propanoate + H2O = N-formimidoyl-L-glutamate. The protein operates within amino-acid degradation; L-histidine degradation into L-glutamate; N-formimidoyl-L-glutamate from L-histidine: step 3/3. Catalyzes the hydrolytic cleavage of the carbon-nitrogen bond in imidazolone-5-propanoate to yield N-formimidoyl-L-glutamate. It is the third step in the universal histidine degradation pathway. The polypeptide is Imidazolonepropionase (Desulfotalea psychrophila (strain LSv54 / DSM 12343)).